The primary structure comprises 132 residues: Salivary protein 15 Iper-2 (132 aa).

The first 18 residues, 1 to 18, serve as a signal peptide directing secretion; that stretch reads MKVVCIIVLFVIVAVNES. Asn24, Asn36, Asn62, Asn89, and Asn101 each carry an N-linked (GlcNAc...) asparagine glycan. Positions 113-132 are CD4-binding; sequence GPNGQTCADKSQCVGHIPGC.

It belongs to the salp15 family. In terms of assembly, interacts with host CD4. Interacts with host DC-SIGN (CD209). (Microbial infection) Interacts with Borrelia outer surface protein C (OspC). As to expression, expressed in salivary glands from feeding female ticks. Highly expressed 1 day after start of feeding, and weakly expressed at the initiation of feeding and 4 days after start of feeding.

The protein resides in the secreted. Functionally, salivary tick protein that downregulates host immune system by binding to both dendritic cells, and CD4(+) T cells. Specifically binds to the CD4 coreceptor on T cells. This interaction prevents the activation of the Src kinase, Lck, and its downstream substrate Zap-70, and results in deficient activation of PLCgamma1, the repression of calcium fluxes triggered by T-cell antigen receptor (TCR) ligation, and a subsequent reduction in interleukin-2 production. This salivary protein also binds to DC-SIGN (CD209) on dendritic cells (DC) and activates the Raf-1 kinase/MEK signaling pathway that results in down-regulating expression of pro-inflammatory cytokines. Furthermore, it inhibits T cell proliferation induced by DCs. It also inhibits in vitro keratinocyte inflammation induced by Borrelia burgdorferi or by the major outer surface protein (OspC) of Borrelia. In addition, it downregulates chemokines and monocyte chemoattractant protein 1, as well as several antimicrobial peptides such as defensins, cathelicidin, psoriasin, and RNase 7. Apart from its immunomodulatory activities, it is also associated with protection of Borrelia spirochetes from antibody-mediated killing through its binding to OspC. In vivo, tests on different immune disease animal models show promising therapeutic results, e.g., in inhibiting HIV infection, experimental autoimmune encephalomyelitis, transplantation rejection, and asthma. (Microbial infection) Protects Borrelia garinii from anti-Borrelia antibody-mediated cytotoxicity in vitro. May facilitate B.garinii transmission in mouse model. Its function is as follows. (Microbial infection) Protects Borrelia burgdorferi from anti-Borrelia antibody-mediated cytotoxicity in vitro. In terms of biological role, (Microbial infection) Protects Borrelia afzelii from anti-Borrelia antibody-mediated cytotoxicity in vitro. In Ixodes persulcatus (Taiga tick), this protein is Salivary protein 15 Iper-2.